A 232-amino-acid chain; its full sequence is 5'-methylthioadenosine/S-adenosylhomocysteine nucleosidase (232 aa).

The Proton acceptor role is filled by Glu12. Residues Gly78, Ile152, and 173-174 (ME) contribute to the substrate site. The Proton donor role is filled by Asp197.

Belongs to the PNP/UDP phosphorylase family. MtnN subfamily. Homodimer.

It carries out the reaction S-adenosyl-L-homocysteine + H2O = S-(5-deoxy-D-ribos-5-yl)-L-homocysteine + adenine. The enzyme catalyses S-methyl-5'-thioadenosine + H2O = 5-(methylsulfanyl)-D-ribose + adenine. It catalyses the reaction 5'-deoxyadenosine + H2O = 5-deoxy-D-ribose + adenine. The protein operates within amino-acid biosynthesis; L-methionine biosynthesis via salvage pathway; S-methyl-5-thio-alpha-D-ribose 1-phosphate from S-methyl-5'-thioadenosine (hydrolase route): step 1/2. Catalyzes the irreversible cleavage of the glycosidic bond in both 5'-methylthioadenosine (MTA) and S-adenosylhomocysteine (SAH/AdoHcy) to adenine and the corresponding thioribose, 5'-methylthioribose and S-ribosylhomocysteine, respectively. Also cleaves 5'-deoxyadenosine, a toxic by-product of radical S-adenosylmethionine (SAM) enzymes, into 5-deoxyribose and adenine. Thus, is required for in vivo function of the radical SAM enzymes biotin synthase and lipoic acid synthase, that are inhibited by 5'-deoxyadenosine accumulation. This Salmonella agona (strain SL483) protein is 5'-methylthioadenosine/S-adenosylhomocysteine nucleosidase.